Reading from the N-terminus, the 306-residue chain is Polyisoprenyl-teichoic acid--peptidoglycan teichoic acid transferase TagU (306 aa).

Topologically, residues M1 to T11 are cytoplasmic. The chain crosses the membrane as a helical; Signal-anchor for type II membrane protein span at residues L12–Y32. Over Y33 to K306 the chain is Extracellular.

The protein belongs to the LytR/CpsA/Psr (LCP) family. In terms of assembly, interacts with MreB. Interacts with FloT.

The protein resides in the cell membrane. It is found in the membrane raft. It participates in cell wall biogenesis. May catalyze the final step in cell wall teichoic acid biosynthesis, the transfer of the anionic cell wall polymers (APs) from their lipid-linked precursor to the cell wall peptidoglycan (PG). This Bacillus subtilis (strain 168) protein is Polyisoprenyl-teichoic acid--peptidoglycan teichoic acid transferase TagU.